Here is a 262-residue protein sequence, read N- to C-terminus: MALLELERISAQYPGASTPVLADINLSLGPRQLLVALGPSGSGKTSLLNLIAGFVAPSGGHITLDGVPVQGPGAERGVVFQDDALLPWQNVLGNVAFGLELAGVPRAQREAKAREMLTLVDLDGFGERRIWQLSGGQKQRVGLARALAADPRVLLMDEPFGALDAFTREQMQELLLQVWQRTAKPVFLITHDIEEAVFLASELVLLAPNPGRVVERLQLNFGQRYAAGESARAIKSDPAFIETREHVLARVFSQRQSLQERA.

The region spanning 4 to 233 (LELERISAQY…RYAAGESARA (230 aa)) is the ABC transporter domain. 38–45 (GPSGSGKT) is a binding site for ATP.

Belongs to the ABC transporter superfamily. Taurine importer (TC 3.A.1.17.1) family. As to quaternary structure, the complex is composed of two ATP-binding proteins (TauB), two transmembrane proteins (TauC) and a solute-binding protein (TauA).

It is found in the cell inner membrane. It catalyses the reaction taurine(out) + ATP + H2O = taurine(in) + ADP + phosphate + H(+). Its function is as follows. Part of the ABC transporter complex TauABC involved in taurine import. Responsible for energy coupling to the transport system. The protein is Taurine import ATP-binding protein TauB of Pseudomonas putida (strain ATCC 47054 / DSM 6125 / CFBP 8728 / NCIMB 11950 / KT2440).